Consider the following 146-residue polypeptide: Protein MGF 100-3L (146 aa).

Belongs to the asfivirus MGF 100 family.

Its function is as follows. Plays a role in virus cell tropism, and may be required for efficient virus replication in macrophages. The protein is Protein MGF 100-3L of Ornithodoros (relapsing fever ticks).